Here is a 413-residue protein sequence, read N- to C-terminus: Porin PorA (413 aa).

The first 22 residues, 1–22 (MKKVVSSLLIILGAAMLIFAIA), serve as a signal peptide directing secretion. Residues 265-288 (TKSAADSKDDKKKDGDKKDEKSPE) are disordered.

Belongs to the PorA family.

Its subcellular location is the secreted. It localises to the cell wall. Its function is as follows. Forms water-filled channels that favor the permeation of cations. In Corynebacterium resistens (strain DSM 45100 / JCM 12819 / GTC 2026 / SICGH 158), this protein is Porin PorA.